A 282-amino-acid polypeptide reads, in one-letter code: Pantothenate synthetase (282 aa).

Residue 30-37 (MGYLHEGH) coordinates ATP. The active-site Proton donor is H37. Q61 is a (R)-pantoate binding site. Position 61 (Q61) interacts with beta-alanine. 147 to 150 (GMKD) is a binding site for ATP. Q153 is a (R)-pantoate binding site. ATP is bound by residues V176 and 184-187 (KSSR).

The protein belongs to the pantothenate synthetase family. Homodimer.

It localises to the cytoplasm. The enzyme catalyses (R)-pantoate + beta-alanine + ATP = (R)-pantothenate + AMP + diphosphate + H(+). It participates in cofactor biosynthesis; (R)-pantothenate biosynthesis; (R)-pantothenate from (R)-pantoate and beta-alanine: step 1/1. Functionally, catalyzes the condensation of pantoate with beta-alanine in an ATP-dependent reaction via a pantoyl-adenylate intermediate. The chain is Pantothenate synthetase from Geobacillus sp. (strain WCH70).